The following is a 377-amino-acid chain: DAR GTPase 2, mitochondrial (377 aa).

A mitochondrion-targeting transit peptide spans 1–21 (MATAKTWKIAREIGDAVIKAS). The 178-residue stretch at 34–211 (AAAVRAISER…VLDTPGIFPP (178 aa)) folds into the CP-type G domain. Residues 55–59 (DARIP) carry the DARXP motif motif. GTP is bound by residues 82–85 (NKME), 110–111 (NS), 150–155 (NVGKSA), and G207.

Belongs to the TRAFAC class YlqF/YawG GTPase family. MTG1 subfamily.

The protein localises to the mitochondrion. GTPase that may function in mitochondrial ribosome assembly. This Arabidopsis thaliana (Mouse-ear cress) protein is DAR GTPase 2, mitochondrial.